A 427-amino-acid polypeptide reads, in one-letter code: Enolase (427 aa).

Gln-163 lines the (2R)-2-phosphoglycerate pocket. The active-site Proton donor is the Glu-205. 3 residues coordinate Mg(2+): Asp-242, Glu-285, and Asp-312. (2R)-2-phosphoglycerate-binding residues include Lys-337, Arg-366, Ser-367, and Lys-388. The active-site Proton acceptor is the Lys-337.

Belongs to the enolase family. Requires Mg(2+) as cofactor.

The protein resides in the cytoplasm. It is found in the secreted. The protein localises to the cell surface. It catalyses the reaction (2R)-2-phosphoglycerate = phosphoenolpyruvate + H2O. Its pathway is carbohydrate degradation; glycolysis; pyruvate from D-glyceraldehyde 3-phosphate: step 4/5. Functionally, catalyzes the reversible conversion of 2-phosphoglycerate (2-PG) into phosphoenolpyruvate (PEP). It is essential for the degradation of carbohydrates via glycolysis. This is Enolase from Paraburkholderia phymatum (strain DSM 17167 / CIP 108236 / LMG 21445 / STM815) (Burkholderia phymatum).